Here is a 76-residue protein sequence, read N- to C-terminus: uncharacterized protein (76 aa).

A helical transmembrane segment spans residues glycine 24–cysteine 44.

Its subcellular location is the membrane. This is an uncharacterized protein from Schizosaccharomyces pombe (strain 972 / ATCC 24843) (Fission yeast).